The following is a 93-amino-acid chain: Small ribosomal subunit protein uS19 (93 aa).

The protein belongs to the universal ribosomal protein uS19 family.

Functionally, protein S19 forms a complex with S13 that binds strongly to the 16S ribosomal RNA. The protein is Small ribosomal subunit protein uS19 of Synechococcus sp. (strain JA-2-3B'a(2-13)) (Cyanobacteria bacterium Yellowstone B-Prime).